Here is a 750-residue protein sequence, read N- to C-terminus: Methylmalonyl-CoA mutase, mitochondrial (750 aa).

A mitochondrion-targeting transit peptide spans 1–32; the sequence is MLRVKNQLFLLSPHYLKQVKESSGSRLIRQRF. Residue Gln-50 coordinates malonyl-CoA. Lys-89 carries the post-translational modification N6-acetyllysine. Malonyl-CoA-binding positions include 96–99 and 106–110; these read YPTM and TIRQY. Lys-212 carries the N6-acetyllysine modification. Residues 216–218, Arg-228, Lys-255, His-265, and 304–306 contribute to the malonyl-CoA site; these read TIQ and RLS. Lys-335 is modified (N6-acetyllysine). Lys-343 is modified (N6-succinyllysine). Ser-481 is subject to Phosphoserine. Lys-595 bears the N6-succinyllysine mark. Position 602 is an N6-acetyllysine (Lys-602). The B12-binding domain maps to 614-746; that stretch reads RPRLLVAKMG…DDIEKCLEKK (133 aa). Residue His-627 coordinates adenosylcob(III)alamin.

Belongs to the methylmalonyl-CoA mutase family. Homodimer. Interacts (the apoenzyme form) with MMAA; the interaction is GTP dependent. The cofactor is adenosylcob(III)alamin.

It is found in the mitochondrion matrix. It localises to the mitochondrion. The protein resides in the cytoplasm. It carries out the reaction (R)-methylmalonyl-CoA = succinyl-CoA. With respect to regulation, inhibited by itaconyl-CoA, a metabolite that inactivates the coenzyme B12 cofactor. Catalyzes the reversible isomerization of methylmalonyl-CoA (MMCoA) (generated from branched-chain amino acid metabolism and degradation of dietary odd chain fatty acids and cholesterol) to succinyl-CoA (3-carboxypropionyl-CoA), a key intermediate of the tricarboxylic acid cycle. This is Methylmalonyl-CoA mutase, mitochondrial (MMUT) from Macaca fascicularis (Crab-eating macaque).